Here is a 129-residue protein sequence, read N- to C-terminus: Small ribosomal subunit protein uS11c (129 aa).

This sequence belongs to the universal ribosomal protein uS11 family. As to quaternary structure, part of the 30S ribosomal subunit.

It is found in the plastid. The protein localises to the chloroplast. This is Small ribosomal subunit protein uS11c from Oltmannsiellopsis viridis (Marine flagellate).